A 147-amino-acid polypeptide reads, in one-letter code: Small ribosomal subunit protein bS16m (147 aa).

The protein belongs to the bacterial ribosomal protein bS16 family. As to quaternary structure, component of the mitochondrial ribosome small subunit (28S) which comprises a 12S rRNA and about 30 distinct proteins.

It is found in the mitochondrion. In Caenorhabditis elegans, this protein is Small ribosomal subunit protein bS16m (mrps-16).